Consider the following 404-residue polypeptide: Cysteine desulfurase IscS (404 aa).

Pyridoxal 5'-phosphate-binding positions include 75–76 (AT), Asn155, Gln183, and 203–205 (SGH). N6-(pyridoxal phosphate)lysine is present on Lys206. Thr243 serves as a coordination point for pyridoxal 5'-phosphate. Catalysis depends on Cys328, which acts as the Cysteine persulfide intermediate. Position 328 (Cys328) interacts with [2Fe-2S] cluster.

This sequence belongs to the class-V pyridoxal-phosphate-dependent aminotransferase family. NifS/IscS subfamily. As to quaternary structure, homodimer. Forms a heterotetramer with IscU, interacts with other sulfur acceptors. Pyridoxal 5'-phosphate serves as cofactor.

The protein resides in the cytoplasm. The catalysed reaction is (sulfur carrier)-H + L-cysteine = (sulfur carrier)-SH + L-alanine. Its pathway is cofactor biosynthesis; iron-sulfur cluster biosynthesis. Its function is as follows. Master enzyme that delivers sulfur to a number of partners involved in Fe-S cluster assembly, tRNA modification or cofactor biosynthesis. Catalyzes the removal of elemental sulfur atoms from cysteine to produce alanine. Functions as a sulfur delivery protein for Fe-S cluster synthesis onto IscU, an Fe-S scaffold assembly protein, as well as other S acceptor proteins. The chain is Cysteine desulfurase IscS from Pectobacterium atrosepticum (strain SCRI 1043 / ATCC BAA-672) (Erwinia carotovora subsp. atroseptica).